A 147-amino-acid chain; its full sequence is Protein phosphatase 1 regulatory subunit 14B (147 aa).

Residues 1–15 (MADSGPAGGAALAAP) are compositionally biased toward low complexity. The disordered stretch occupies residues 1–55 (MADSGPAGGAALAAPAPGPGSGGAGPRVYFQSPPGAAGEGPGGADDEGPVRRQGK). An N-acetylalanine modification is found at alanine 2. Position 21 is a phosphoserine (serine 21). Tyrosine 29 carries the post-translational modification Phosphotyrosine. A Phosphoserine modification is found at serine 32. Residue threonine 57 is modified to Phosphothreonine. Positions 61–103 (DRKELRKRLNLEEWILEQLTRLYDCQEEEIPELEIDVDELLDM) form a coiled coil.

It belongs to the PP1 inhibitor family. Post-translationally, phosphorylated primarily on Thr-57 by PKC (in vitro). An unknown Ser is also phosphorylated by PKC (in vitro).

The protein localises to the cytoplasm. Its function is as follows. Inhibitor of PPP1CA. Has over 50-fold higher inhibitory activity when phosphorylated. The sequence is that of Protein phosphatase 1 regulatory subunit 14B (PPP1R14B) from Sus scrofa (Pig).